The sequence spans 305 residues: Ribonuclease BN (305 aa).

Positions 64, 66, 68, 69, 141, 212, and 270 each coordinate Zn(2+). The active-site Proton acceptor is the Asp68.

It belongs to the RNase Z family. RNase BN subfamily. As to quaternary structure, homodimer. Zn(2+) is required as a cofactor.

Zinc phosphodiesterase, which has both exoribonuclease and endoribonuclease activities. This is Ribonuclease BN from Escherichia coli O139:H28 (strain E24377A / ETEC).